Here is a 1032-residue protein sequence, read N- to C-terminus: Exportin-T (1032 aa).

The protein belongs to the exportin family.

It localises to the nucleus. It is found in the cytoplasm. Its function is as follows. tRNA nucleus export receptor which facilitates tRNA translocation across the nuclear pore complex. Involved in pre-tRNA splicing, probably by affecting the interaction of pre-tRNA with splicing endonuclease. This Aspergillus fumigatus (strain CBS 144.89 / FGSC A1163 / CEA10) (Neosartorya fumigata) protein is Exportin-T (los1).